A 410-amino-acid chain; its full sequence is Arginine deiminase (410 aa).

The Amidino-cysteine intermediate role is filled by cysteine 400.

This sequence belongs to the arginine deiminase family.

It is found in the cytoplasm. It catalyses the reaction L-arginine + H2O = L-citrulline + NH4(+). It participates in amino-acid degradation; L-arginine degradation via ADI pathway; carbamoyl phosphate from L-arginine: step 1/2. This is Arginine deiminase from Bacillus cereus (strain ATCC 10987 / NRS 248).